A 654-amino-acid polypeptide reads, in one-letter code: Pyoverdine export ATP-binding/permease protein PvdT (654 aa).

In terms of domain architecture, ABC transporter spans 6–245 (IELCDIRKAY…AHKGIQAEEL (240 aa)). Residue 43-50 (GASGSGKS) coordinates ATP. A run of 4 helical transmembrane segments spans residues 282 to 302 (ALTL…LAVG), 529 to 549 (LSLM…IGVM), 584 to 604 (AIML…VVGA), and 614 to 634 (AFAL…GVVF).

It belongs to the ABC transporter superfamily. Macrolide exporter (TC 3.A.1.122) family. Part of the tripartite efflux system PvdRT-OpmQ, which is composed of an inner membrane component with both ATPase and permease domains, PvdT, a periplasmic membrane fusion protein, PvdR, and an outer membrane component, OpmQ.

Its subcellular location is the cell inner membrane. With respect to regulation, has a basal ATPase activity that is stimulated by PvdR. In vitro, interaction with PVD influences the affinity of PvdT to PvdR. Part of the tripartite efflux system PvdRT-OpmQ required for the secretion into the extracellular milieu of the siderophore pyoverdine (PVD), which is involved in iron acquisition. This subunit binds PVD and drives its secretion by hydrolyzing ATP. The system is responsible for export of newly synthesized PVD after the final steps of biosynthesis have taken place in the periplasm. It is also responsible for recycling of PVD after internalization of ferri-PVD into the periplasm by the outer-membrane receptor FpvA and release of iron from PVD, thus making PVD available for new cycles of iron uptake. Contributes to resistance against ampicillin. This chain is Pyoverdine export ATP-binding/permease protein PvdT, found in Pseudomonas putida (strain ATCC 47054 / DSM 6125 / CFBP 8728 / NCIMB 11950 / KT2440).